Reading from the N-terminus, the 434-residue chain is Na(+)/H(+) antiporter NhaA 1 (434 aa).

11 consecutive transmembrane segments (helical) span residues Gly-34 to Ala-54, Leu-73 to Leu-93, Ala-111 to Trp-131, Gly-141 to Ser-161, Phe-171 to Tyr-191, Glu-194 to Val-214, Val-233 to Val-253, Ser-278 to Phe-298, Val-313 to Ala-333, Trp-346 to Ile-366, and His-380 to Leu-400.

This sequence belongs to the NhaA Na(+)/H(+) (TC 2.A.33) antiporter family.

The protein localises to the cell membrane. The enzyme catalyses Na(+)(in) + 2 H(+)(out) = Na(+)(out) + 2 H(+)(in). Its function is as follows. Na(+)/H(+) antiporter that extrudes sodium in exchange for external protons. This Nocardioides sp. (strain ATCC BAA-499 / JS614) protein is Na(+)/H(+) antiporter NhaA 1.